A 425-amino-acid polypeptide reads, in one-letter code: Xyloglucan O-acetyltransferase 2 (425 aa).

Over Met-1–Lys-18 the chain is Cytoplasmic. The chain crosses the membrane as a helical; Signal-anchor for type II membrane protein span at residues Leu-19–Tyr-38. At Pro-39–Gln-425 the chain is on the lumenal side. 4 disulfide bridges follow: Cys-68–Cys-118, Cys-89–Cys-154, Cys-98–Cys-398, and Cys-313–Cys-394. An N-linked (GlcNAc...) asparagine glycan is attached at Asn-85. The short motif at Gly-141–Ser-143 is the GDS motif element. The active-site Nucleophile is Ser-143. N-linked (GlcNAc...) asparagine glycosylation is found at Asn-183 and Asn-259. Asp-393 functions as the Proton donor in the catalytic mechanism. Positions Asp-393 to His-396 match the DXXH motif motif. The active-site Proton acceptor is His-396.

Belongs to the PC-esterase family. TBL subfamily.

It localises to the golgi apparatus membrane. Functionally, xyloglucan acetyltransferase that catalyzes the acetylation of fucosylated Gal residues on xyloglucan side chains. Predominantly catalyze 6-O-monoacetylation of Gal residues in the Fuc-Gal-Xyl trisaccharide side chains of xyloglucan oligomers. This Populus trichocarpa (Western balsam poplar) protein is Xyloglucan O-acetyltransferase 2.